The chain runs to 227 residues: uncharacterized protein (227 aa).

2 helical membrane passes run 113–133 and 141–161; these read IMLI…FIVF and FGIC…NGLI.

The protein localises to the membrane. This is an uncharacterized protein from Dictyostelium discoideum (Social amoeba).